We begin with the raw amino-acid sequence, 216 residues long: Neural cell adhesion molecule L1.2 (216 aa).

Positions E1–V64 constitute a Fibronectin type-III domain. The Extracellular segment spans residues E1–W73. 2 N-linked (GlcNAc...) asparagine glycosylation sites follow: N22 and N46. A helical transmembrane segment spans residues F74–I94. Topologically, residues K95–D216 are cytoplasmic. 2 disordered regions span residues Y127–S149 and D173–D216. A compositionally biased stretch (basic and acidic residues) spans R128–T139.

Belongs to the immunoglobulin superfamily. L1/neurofascin/NgCAM family. As to expression, expressed in many postmitotic neurons in 16-36 hours embryos. Little or no expression in the olfactory placode, the anterior lateral line/acoustic ganglia complex, the posterior lateral line ganglion, late-developing hindbrain neurons and some Rohon-Beard cells in the spinal cord.

Its subcellular location is the cell membrane. The protein localises to the cell projection. It localises to the growth cone. Cell adhesion molecule with an important role in the development of the nervous system. Involved in neuron-neuron adhesion, neurite fasciculation, outgrowth of neurites, etc. Binds to axonin on neurons. This is Neural cell adhesion molecule L1.2 (nadl1.2) from Danio rerio (Zebrafish).